The chain runs to 1431 residues: Probable ATP-dependent RNA helicase spindle-E (1431 aa).

The Helicase ATP-binding domain occupies 127-294 (LAAIRENPVV…FAMSSSLPPV (168 aa)). 140–147 (GETGCGKT) is a binding site for ATP. The DEAH box signature appears at 240–243 (DEVH). One can recognise a Helicase C-terminal domain in the interval 354 to 526 (QSQQSYEEAK…NSVLKAKELE (173 aa)). The Tudor domain maps to 937-1000 (AKAVTKGLQL…RLMSPQLKRD (64 aa)).

The protein belongs to the DEAD box helicase family. DEAH subfamily.

Its subcellular location is the cytoplasm. The enzyme catalyses ATP + H2O = ADP + phosphate + H(+). Functionally, probable ATP-binding RNA helicase which plays a central role during spermatogenesis and oogenesis by repressing transposable elements and preventing their mobilization, which is essential for the germline integrity. Acts via the piRNA metabolic process, which mediates the repression of transposable elements during meiosis by forming complexes composed of piRNAs and Piwi and govern the methylation and subsequent repression of transposons. Involved in the repression of LTR retrotransposon copia. Also involved in telomere regulation by repressing specialized telomeric retroelements HeT-A, TAHRE, and TART; Drosophila telomeres being maintained by transposition of specialized telomeric retroelements. Involved in telomeric trans-silencing, a repression mechanism by which a transposon or a transgene inserted in subtelomeric heterochromatin has the capacity to repress in trans in the female germline, a homologous transposon, or transgene located in euchromatin. Involved in the repression of testis-expressed Stellate genes by the homologous Su(Ste) repeats. Required for anteroposterior and dorsoventral axis formation during oogenesis. In Drosophila mojavensis (Fruit fly), this protein is Probable ATP-dependent RNA helicase spindle-E (spn-E).